Consider the following 360-residue polypeptide: Probable mannan endo-1,4-beta-mannosidase A (360 aa).

Positions 1-18 (MKLSQILTFASLLSGALA) are cleaved as a signal peptide. Residues asparagine 142 and asparagine 178 each contribute to the substrate site. Glutamate 179 acts as the Proton donor in catalysis. Substrate is bound at residue tyrosine 254. The Nucleophile role is filled by glutamate 287. N-linked (GlcNAc...) asparagine glycosylation occurs at asparagine 307. Substrate is bound at residue tryptophan 317.

Belongs to the glycosyl hydrolase 5 (cellulase A) family.

The protein localises to the secreted. It catalyses the reaction Random hydrolysis of (1-&gt;4)-beta-D-mannosidic linkages in mannans, galactomannans and glucomannans.. Endo-1,4-mannanase, a crucial enzyme for depolymerization of seed galactomannans and wood galactoglucomannans. This chain is Probable mannan endo-1,4-beta-mannosidase A (manA), found in Aspergillus clavatus (strain ATCC 1007 / CBS 513.65 / DSM 816 / NCTC 3887 / NRRL 1 / QM 1276 / 107).